Here is a 411-residue protein sequence, read N- to C-terminus: Glycogen synthase kinase-3 homolog MsK-3 (411 aa).

The Protein kinase domain occupies 74-358 (YMAERVVGHG…ALEALVHPFY (285 aa)). ATP is bound by residues 80–88 (VGHGSFGVV) and Lys-103. Asp-199 acts as the Proton acceptor in catalysis. Tyr-234 carries the phosphotyrosine modification.

Belongs to the protein kinase superfamily. CMGC Ser/Thr protein kinase family. GSK-3 subfamily. Absent in leaves and petioles, very low levels are seen in the stems and roots while a moderate expression is seen in the nodes.

The catalysed reaction is L-seryl-[protein] + ATP = O-phospho-L-seryl-[protein] + ADP + H(+). It catalyses the reaction L-threonyl-[protein] + ATP = O-phospho-L-threonyl-[protein] + ADP + H(+). The protein is Glycogen synthase kinase-3 homolog MsK-3 (MSK-3) of Medicago sativa (Alfalfa).